A 623-amino-acid chain; its full sequence is Glutathione import ATP-binding protein GsiA (623 aa).

2 consecutive ABC transporter domains span residues 15 to 269 (VSGL…QTLL) and 325 to 564 (LRSG…RKLM). ATP contacts are provided by residues 49–56 (GESGSGKS) and 357–364 (GESGSGKS).

The protein belongs to the ABC transporter superfamily. Glutathione importer (TC 3.A.1.5.11) family. As to quaternary structure, the complex is composed of two ATP-binding proteins (GsiA), two transmembrane proteins (GsiC and GsiD) and a solute-binding protein (GsiB).

It is found in the cell inner membrane. It catalyses the reaction glutathione(out) + ATP + H2O = glutathione(in) + ADP + phosphate + H(+). Its function is as follows. Part of the ABC transporter complex GsiABCD involved in glutathione import. Responsible for energy coupling to the transport system. The sequence is that of Glutathione import ATP-binding protein GsiA from Salmonella choleraesuis (strain SC-B67).